A 375-amino-acid chain; its full sequence is Platelet-derived growth factor receptor-like protein (375 aa).

An N-terminal signal peptide occupies residues 1 to 17; the sequence is MKVWLLLGLLLLHEALG. The tract at residues 19 to 63 is disordered; sequence VAGQHPPKNKRPKEQGENRIKPTNKKAKPKIPKIKDRDTADSAPK. A compositionally biased stretch (basic residues) spans 40–50; it reads PTNKKAKPKIP. Residues 62–159 enclose the Ig-like C2-type 1 domain; it reads PKSQSIMMQA…GYICRRDEAR (98 aa). A disulfide bridge links Cys96 with Cys143. N-linked (GlcNAc...) asparagine glycosylation is present at Asn219. The region spanning 272-375 is the Ig-like C2-type 2 domain; sequence PSTTILASSN…TTVATTVEFS (104 aa). A disulfide bond links Cys293 and Cys357.

Forms a complex composed of PDGFRL, TNK2 and GRB2.

The protein resides in the secreted. This is Platelet-derived growth factor receptor-like protein (Pdgfrl) from Rattus norvegicus (Rat).